The primary structure comprises 75 residues: Small ribosomal subunit protein bS18 (75 aa).

Over residues 1-11 the composition is skewed to basic residues; that stretch reads MAAKPFFRRRK. The tract at residues 1-21 is disordered; the sequence is MAAKPFFRRRKTDPFEGENAP.

It belongs to the bacterial ribosomal protein bS18 family. Part of the 30S ribosomal subunit. Forms a tight heterodimer with protein bS6.

Binds as a heterodimer with protein bS6 to the central domain of the 16S rRNA, where it helps stabilize the platform of the 30S subunit. The sequence is that of Small ribosomal subunit protein bS18 from Jannaschia sp. (strain CCS1).